The following is a 312-amino-acid chain: Ubiquinone biosynthesis protein COQ9, mitochondrial (312 aa).

Residues 1 to 45 constitute a mitochondrion transit peptide; it reads MAATAAVSGVLRRLGWRLLQLRCLPVARCQSPLMPRAFHTAVGFR. Residues 17–32 carry the SIFI-degron motif; that stretch reads RLLQLRCLPVARCQSP. The tract at residues 43–92 is disordered; sequence GFRSSEEQRQQPPHSSQQHSETQGPEFSRPPPRYTDQSGEEEEDYESEEQ. Low complexity predominate over residues 52–63; sequence QQPPHSSQQHSE. Serine 80 is modified (phosphoserine). Residues 80 to 91 are compositionally biased toward acidic residues; it reads SGEEEEDYESEE. N6-acetyllysine is present on lysine 169. Arginine 238 is an a 1,2-diacylglycero-3-phosphoethanolamine binding site.

Belongs to the COQ9 family. In terms of assembly, homodimer. Heterodimer; two heterodimers of COQ7:COQ9 come together on the same side of the lipid pseudo-bilayer and form a curved tetramer with a hydrophobic surface suitable for membrane interaction. These two tetramers assemble into a soluble octamer with a pseudo-bilayer of lipids captured within. Interacts with COQ7; this interaction allows ubiquinone (CoQ) isoprene intermediates presentation to COQ7 and facilitates the COQ7-mediated hydroxylase step. In response to mitochondrial stress, the precursor protein is ubiquitinated by the SIFI complex in the cytoplasm before mitochondrial import, leading to its degradation. Within the SIFI complex, UBR4 initiates ubiquitin chain that are further elongated or branched by KCMF1.

It localises to the mitochondrion. It functions in the pathway cofactor biosynthesis; ubiquinone biosynthesis. Membrane-associated protein that warps the membrane surface to access and bind aromatic isoprenes with high specificity, including ubiquinone (CoQ) isoprene intermediates and presents them directly to COQ7, therefore facilitating the COQ7-mediated hydroxylase step. Participates in the biosynthesis of coenzyme Q, also named ubiquinone, an essential lipid-soluble electron transporter for aerobic cellular respiration. This is Ubiquinone biosynthesis protein COQ9, mitochondrial from Rattus norvegicus (Rat).